Consider the following 196-residue polypeptide: Imidazoleglycerol-phosphate dehydratase (196 aa).

The protein belongs to the imidazoleglycerol-phosphate dehydratase family.

It is found in the cytoplasm. It carries out the reaction D-erythro-1-(imidazol-4-yl)glycerol 3-phosphate = 3-(imidazol-4-yl)-2-oxopropyl phosphate + H2O. It functions in the pathway amino-acid biosynthesis; L-histidine biosynthesis; L-histidine from 5-phospho-alpha-D-ribose 1-diphosphate: step 6/9. This Oleidesulfovibrio alaskensis (strain ATCC BAA-1058 / DSM 17464 / G20) (Desulfovibrio alaskensis) protein is Imidazoleglycerol-phosphate dehydratase.